Consider the following 130-residue polypeptide: Small ribosomal subunit protein uS11 (130 aa).

Belongs to the universal ribosomal protein uS11 family. Part of the 30S ribosomal subunit. Interacts with proteins S7 and S18. Binds to IF-3.

Its function is as follows. Located on the platform of the 30S subunit, it bridges several disparate RNA helices of the 16S rRNA. Forms part of the Shine-Dalgarno cleft in the 70S ribosome. The sequence is that of Small ribosomal subunit protein uS11 from Thiobacillus denitrificans (strain ATCC 25259 / T1).